The primary structure comprises 141 residues: Hemoglobin subunit alpha-1/2 (141 aa).

Positions Val-1–Arg-141 constitute a Globin domain. Phosphoserine is present on Ser-3. Lys-7 carries the N6-succinyllysine modification. Thr-8 carries the phosphothreonine modification. N6-succinyllysine is present on Lys-11. An N6-acetyllysine; alternate modification is found at Lys-16. Lys-16 carries the post-translational modification N6-succinyllysine; alternate. Phosphotyrosine is present on Tyr-24. At Ser-35 the chain carries Phosphoserine. Residue Lys-40 is modified to N6-succinyllysine. Residue Ser-49 is modified to Phosphoserine. His-58 contacts O2. A heme b-binding site is contributed by His-87. Ser-102 carries the post-translational modification Phosphoserine. A Phosphothreonine modification is found at Thr-108. At Ser-124 the chain carries Phosphoserine. 2 positions are modified to phosphothreonine: Thr-134 and Thr-137. Position 138 is a phosphoserine (Ser-138).

The protein belongs to the globin family. As to quaternary structure, heterotetramer of two alpha chains and two beta chains. As to expression, red blood cells.

Its function is as follows. Involved in oxygen transport from the lung to the various peripheral tissues. This chain is Hemoglobin subunit alpha-1/2, found in Mustela lutreola (European mink).